The primary structure comprises 384 residues: Probable peptidoglycan glycosyltransferase FtsW (384 aa).

At 1-19 (MAAVWRWFVPERPSFYDRG) the chain is on the cytoplasmic side. A helical membrane pass occupies residues 20–40 (LLALTFSLMGIGLMMVASASI). Topologically, residues 41–54 (KEGPGGDMFYFTKR) are periplasmic. A helical transmembrane segment spans residues 55 to 75 (HLIFLFVCLGIGVGTLYLPLE). The Cytoplasmic portion of the chain corresponds to 76 to 83 (RWREWSGR). A helical transmembrane segment spans residues 84–104 (LLVGALGLLFAVLAVGRTVNG). Topologically, residues 105 to 110 (AKRWIG) are periplasmic. Residues 111–131 (FGFFNIQPAELAKLALIVFIA) form a helical membrane-spanning segment. Over 132–143 (SYLVRRSDEVRG) the chain is Cytoplasmic. Residues 144-164 (NIAGFVKPLAVVFLLAIMLLA) form a helical membrane-spanning segment. Residues 165–166 (QP) lie on the Periplasmic side of the membrane. Residues 167 to 187 (DLGSVVVLFVCTFGLLFIGGA) form a helical membrane-spanning segment. Residue Lys188 is a topological domain, cytoplasmic. The helical transmembrane segment at 189-209 (LVQFIAIIVAGLSALAGLIIY) threads the bilayer. The Periplasmic portion of the chain corresponds to 210–267 (EPYRLRRVTSFLDPWADPFGSGYQLTQSLMAFGRGGFFGQGLGNSVQKLSYLPEAHTD). The chain crosses the membrane as a helical span at residues 268-288 (FVFAILGEELGYFGVLVVLFL). Residues 289–316 (QLLLAMKALQIGRTALLRSKFFEGYMAC) lie on the Cytoplasmic side of the membrane. The chain crosses the membrane as a helical span at residues 317–337 (GIGIWFSFQTVVNVGAAAGML). Residues 338–343 (PTKGLT) are Periplasmic-facing. Residues 344–364 (LPLVSYGGSSLIAITMAVAIL) traverse the membrane as a helical segment. The Cytoplasmic portion of the chain corresponds to 365 to 384 (LRIDFERRLDTSHVIQREAA).

The protein belongs to the SEDS family. FtsW subfamily.

It is found in the cell inner membrane. The enzyme catalyses [GlcNAc-(1-&gt;4)-Mur2Ac(oyl-L-Ala-gamma-D-Glu-L-Lys-D-Ala-D-Ala)](n)-di-trans,octa-cis-undecaprenyl diphosphate + beta-D-GlcNAc-(1-&gt;4)-Mur2Ac(oyl-L-Ala-gamma-D-Glu-L-Lys-D-Ala-D-Ala)-di-trans,octa-cis-undecaprenyl diphosphate = [GlcNAc-(1-&gt;4)-Mur2Ac(oyl-L-Ala-gamma-D-Glu-L-Lys-D-Ala-D-Ala)](n+1)-di-trans,octa-cis-undecaprenyl diphosphate + di-trans,octa-cis-undecaprenyl diphosphate + H(+). It functions in the pathway cell wall biogenesis; peptidoglycan biosynthesis. Its function is as follows. Peptidoglycan polymerase that is essential for cell division. The polypeptide is Probable peptidoglycan glycosyltransferase FtsW (Tolumonas auensis (strain DSM 9187 / NBRC 110442 / TA 4)).